The following is a 76-amino-acid chain: VpAmp1.0 (76 aa).

The first 22 residues, 1–22, serve as a signal peptide directing secretion; it reads MKLINLVPVFFVLIIVVDYCHS. Ile41 carries the post-translational modification Isoleucine amide. Residues 42–76 constitute a propeptide that is removed on maturation; sequence GKRSVESQRYVDLNRRDLEQDLQELQDFLDQISEH.

The protein belongs to the non-disulfide-bridged peptide (NDBP) superfamily. Short antimicrobial peptide (group 4) family. Expressed by the venom gland.

It is found in the secreted. The protein resides in the target cell membrane. Antimicrobial peptide with potent activity against Gram-positive bacteria S.aureus (MIC=2.5 uM) and S.agalactiaea (MIC=2.5 uM), and Gram-negative bacteria E.coli (MIC=24 uM) and P.aeruginosa (MIC=2.5 uM), as well as against yeasts Candida albicans (MIC=6.25 uM) and C.glabrata (MIC&gt;50 uM). Also elicits high hemolysis on human erythrocytes (HC(50)=9.2 uM). In Mesomexovis punctatus (Scorpion), this protein is VpAmp1.0.